The sequence spans 546 residues: MRSKKTKFIFVTGGVVSSLGKGLASASIGALLENRGLAVTLIKLDPYINVDPGTMSPFQHGEVFVTEDGGETDMDLGHYERFTNARMSRLNNFTSGRIYHAVIMKERRGEYLGKTVQVIPHVTDEIKSSIRQAAQDADVVIVEVGGTVGDIESLPFLEAIRQMRYDVGNENVVYVHLTLLPYIGAAGEVKTKPTQHSVMKLREIGIQPDFLVCRTDREVPRELKDKIAMFCNVDTRSVFTSPDVRSTYELPLELHRQGLDERLAEVLNIWSRAPHLERWENIIRKVYEPARGQVRIAIVGKYVNLTESYKSLNEALLHGGIANDVKVNLHFVDSQEVEEQGAEKLLAGVDAILVPGGFGVRGTEGKIAAVRYAREKKVPFFGICLGLQMAVVEFSRGVLGLSSANSLEFNEHTPHPVVTLMESQVKVQDKGGTMRLGSYACALKPGSLAHQLYGQDTIQERHRHRYEVNNAYRSKLQEAGLVISGSNPELNLVEMIELADHPYFIGCQFHPEFKSKPFAPHPLFSGFIRAALAQRDANAAAGKVTE.

Positions 1–269 are amidoligase domain; the sequence is MRSKKTKFIF…DERLAEVLNI (269 aa). Serine 17 lines the CTP pocket. Residue serine 17 coordinates UTP. Residues 18 to 23 and aspartate 75 contribute to the ATP site; that span reads SLGKGL. Residues aspartate 75 and glutamate 143 each coordinate Mg(2+). CTP-binding positions include 150 to 152, 190 to 195, and lysine 226; these read DIE and KTKPTQ. UTP contacts are provided by residues 190–195 and lysine 226; that span reads KTKPTQ. The Glutamine amidotransferase type-1 domain occupies 295–537; it reads RIAIVGKYVN…IRAALAQRDA (243 aa). Glycine 357 serves as a coordination point for L-glutamine. The Nucleophile; for glutamine hydrolysis role is filled by cysteine 384. Residues 385–388, glutamate 408, and arginine 465 contribute to the L-glutamine site; that span reads LGLQ. Active-site residues include histidine 510 and glutamate 512.

This sequence belongs to the CTP synthase family. In terms of assembly, homotetramer.

The catalysed reaction is UTP + L-glutamine + ATP + H2O = CTP + L-glutamate + ADP + phosphate + 2 H(+). The enzyme catalyses L-glutamine + H2O = L-glutamate + NH4(+). It carries out the reaction UTP + NH4(+) + ATP = CTP + ADP + phosphate + 2 H(+). Its pathway is pyrimidine metabolism; CTP biosynthesis via de novo pathway; CTP from UDP: step 2/2. Allosterically activated by GTP, when glutamine is the substrate; GTP has no effect on the reaction when ammonia is the substrate. The allosteric effector GTP functions by stabilizing the protein conformation that binds the tetrahedral intermediate(s) formed during glutamine hydrolysis. Inhibited by the product CTP, via allosteric rather than competitive inhibition. Catalyzes the ATP-dependent amination of UTP to CTP with either L-glutamine or ammonia as the source of nitrogen. Regulates intracellular CTP levels through interactions with the four ribonucleotide triphosphates. The chain is CTP synthase from Myxococcus xanthus (strain DK1622).